A 260-amino-acid chain; its full sequence is Adenosylcobinamide-GDP ribazoletransferase (260 aa).

Helical transmembrane passes span 3-23 (APLW…LPAW), 36-56 (FAPW…LVLI), 60-80 (WPTS…SGGL), 108-128 (VGAS…AALL), 133-153 (LAPL…LWAM), 180-200 (ALPA…LMIV), 206-226 (MVLM…PELL), and 239-259 (GASV…LLTA).

It belongs to the CobS family. Mg(2+) is required as a cofactor.

The protein resides in the cell inner membrane. It catalyses the reaction alpha-ribazole + adenosylcob(III)inamide-GDP = adenosylcob(III)alamin + GMP + H(+). It carries out the reaction alpha-ribazole 5'-phosphate + adenosylcob(III)inamide-GDP = adenosylcob(III)alamin 5'-phosphate + GMP + H(+). It functions in the pathway cofactor biosynthesis; adenosylcobalamin biosynthesis; adenosylcobalamin from cob(II)yrinate a,c-diamide: step 7/7. Joins adenosylcobinamide-GDP and alpha-ribazole to generate adenosylcobalamin (Ado-cobalamin). Also synthesizes adenosylcobalamin 5'-phosphate from adenosylcobinamide-GDP and alpha-ribazole 5'-phosphate. This Prochlorococcus marinus (strain MIT 9303) protein is Adenosylcobinamide-GDP ribazoletransferase.